We begin with the raw amino-acid sequence, 401 residues long: S-adenosylmethionine synthase (401 aa).

H16 provides a ligand contact to ATP. Residue D18 participates in Mg(2+) binding. E44 is a K(+) binding site. Residues E57 and Q100 each coordinate L-methionine. The interval 100–110 (QSPDIAQGVNE) is flexible loop. ATP contacts are provided by residues 174–176 (DAK), 241–242 (RF), D250, 256–257 (RK), A273, and K277. D250 provides a ligand contact to L-methionine. Residue K281 coordinates L-methionine.

The protein belongs to the AdoMet synthase family. In terms of assembly, homotetramer; dimer of dimers. Requires Mg(2+) as cofactor. The cofactor is K(+).

It localises to the cytoplasm. The enzyme catalyses L-methionine + ATP + H2O = S-adenosyl-L-methionine + phosphate + diphosphate. It participates in amino-acid biosynthesis; S-adenosyl-L-methionine biosynthesis; S-adenosyl-L-methionine from L-methionine: step 1/1. In terms of biological role, catalyzes the formation of S-adenosylmethionine (AdoMet) from methionine and ATP. The overall synthetic reaction is composed of two sequential steps, AdoMet formation and the subsequent tripolyphosphate hydrolysis which occurs prior to release of AdoMet from the enzyme. This chain is S-adenosylmethionine synthase, found in Streptococcus equi subsp. zooepidemicus (strain H70).